Here is a 156-residue protein sequence, read N- to C-terminus: Cyanate hydratase (156 aa).

Residues Arg96, Glu99, and Ser122 contribute to the active site.

The protein belongs to the cyanase family.

The catalysed reaction is cyanate + hydrogencarbonate + 3 H(+) = NH4(+) + 2 CO2. In terms of biological role, catalyzes the reaction of cyanate with bicarbonate to produce ammonia and carbon dioxide. The chain is Cyanate hydratase from Burkholderia lata (strain ATCC 17760 / DSM 23089 / LMG 22485 / NCIMB 9086 / R18194 / 383).